We begin with the raw amino-acid sequence, 27 residues long: Augerpeptide hhe6.2 (27 aa).

3 cysteine pairs are disulfide-bonded: C4-C13, C8-C20, and C12-C27.

In terms of tissue distribution, expressed by the venom duct.

It localises to the secreted. In Hastula hectica (Sea snail), this protein is Augerpeptide hhe6.2.